The primary structure comprises 164 residues: Protein-export protein SecB (164 aa).

Belongs to the SecB family. As to quaternary structure, homotetramer, a dimer of dimers. One homotetramer interacts with 1 SecA dimer.

The protein localises to the cytoplasm. One of the proteins required for the normal export of preproteins out of the cell cytoplasm. It is a molecular chaperone that binds to a subset of precursor proteins, maintaining them in a translocation-competent state. It also specifically binds to its receptor SecA. The protein is Protein-export protein SecB of Nitrosococcus oceani (strain ATCC 19707 / BCRC 17464 / JCM 30415 / NCIMB 11848 / C-107).